We begin with the raw amino-acid sequence, 196 residues long: Nucleotide kinase gp1.7 (196 aa).

The segment at 97–118 is disordered; sequence PRKPHLNKPEVTPTDDQPSAET.

In terms of assembly, dodecamer.

The catalysed reaction is dGMP + ATP = dGDP + ADP. The enzyme catalyses dTMP + ATP = dTDP + ADP. Nucleotide kinase that catalyzes the phosphorylation of dGMP and dTMP to dGDP and dTDP. A double mutation in this protein and the RecBCD inhibitor gp5.9 protein allow phage to overcome the retron Ec48 bacteriophage defense system. This protein alone when overexpressed in E.coli does not cause growth arrest; Y128C may be a silent mutation. The sequence is that of Nucleotide kinase gp1.7 from Escherichia coli (Bacteriophage T7).